The sequence spans 128 residues: Fluoride-specific ion channel FluC (128 aa).

4 helical membrane-spanning segments follow: residues phenylalanine 10 to tryptophan 30, threonine 40 to alanine 60, alanine 71 to valine 91, and alanine 102 to alanine 122. 2 residues coordinate Na(+): glycine 78 and threonine 81.

Belongs to the fluoride channel Fluc/FEX (TC 1.A.43) family.

Its subcellular location is the cell inner membrane. The catalysed reaction is fluoride(in) = fluoride(out). Na(+) is not transported, but it plays an essential structural role and its presence is essential for fluoride channel function. In terms of biological role, fluoride-specific ion channel. Important for reducing fluoride concentration in the cell, thus reducing its toxicity. This is Fluoride-specific ion channel FluC from Bordetella petrii (strain ATCC BAA-461 / DSM 12804 / CCUG 43448).